Consider the following 101-residue polypeptide: Large ribosomal subunit protein uL24 (101 aa).

The protein belongs to the universal ribosomal protein uL24 family. In terms of assembly, part of the 50S ribosomal subunit.

One of two assembly initiator proteins, it binds directly to the 5'-end of the 23S rRNA, where it nucleates assembly of the 50S subunit. In terms of biological role, one of the proteins that surrounds the polypeptide exit tunnel on the outside of the subunit. In Streptococcus sanguinis (strain SK36), this protein is Large ribosomal subunit protein uL24.